The sequence spans 360 residues: Carbamoyl phosphate synthase small chain (360 aa).

The segment at 1–169 is CPSase; the sequence is MTKRLLILED…TKTAYPAPGI (169 aa). 3 residues coordinate L-glutamine: Ser46, Gly220, and Gly222. Positions 172 to 358 constitute a Glutamine amidotransferase type-1 domain; that stretch reads NIVLVDFGLK…LEMIDSWRCT (187 aa). Residue Cys247 is the Nucleophile of the active site. The L-glutamine site is built by Met248, Gln251, Asn289, Gly291, and Tyr292. Catalysis depends on residues His331 and Asp333.

It belongs to the CarA family. Composed of two chains; the small (or glutamine) chain promotes the hydrolysis of glutamine to ammonia, which is used by the large (or ammonia) chain to synthesize carbamoyl phosphate. Tetramer of heterodimers (alpha,beta)4.

The catalysed reaction is hydrogencarbonate + L-glutamine + 2 ATP + H2O = carbamoyl phosphate + L-glutamate + 2 ADP + phosphate + 2 H(+). The enzyme catalyses L-glutamine + H2O = L-glutamate + NH4(+). It functions in the pathway amino-acid biosynthesis; L-arginine biosynthesis; carbamoyl phosphate from bicarbonate: step 1/1. It participates in pyrimidine metabolism; UMP biosynthesis via de novo pathway; (S)-dihydroorotate from bicarbonate: step 1/3. Functionally, small subunit of the glutamine-dependent carbamoyl phosphate synthetase (CPSase). CPSase catalyzes the formation of carbamoyl phosphate from the ammonia moiety of glutamine, carbonate, and phosphate donated by ATP, constituting the first step of 2 biosynthetic pathways, one leading to arginine and/or urea and the other to pyrimidine nucleotides. The small subunit (glutamine amidotransferase) binds and cleaves glutamine to supply the large subunit with the substrate ammonia. The chain is Carbamoyl phosphate synthase small chain from Streptococcus pyogenes serotype M18 (strain MGAS8232).